The chain runs to 491 residues: Probable succinate-semialdehyde dehydrogenase [NADP(+)] (491 aa).

NADP(+)-binding positions include 163–164 (WN), 187–190 (KPAE), and 241–242 (GS). The Proton acceptor role is filled by Glu263. Leu264 is an NADP(+) binding site. Cys297 functions as the Nucleophile in the catalytic mechanism. Glu394 serves as a coordination point for NADP(+).

This sequence belongs to the aldehyde dehydrogenase family.

The catalysed reaction is succinate semialdehyde + NADP(+) + H2O = succinate + NADPH + 2 H(+). It functions in the pathway amino-acid degradation; 4-aminobutanoate degradation. Functionally, catalyzes the NADP(+) dependent oxidation of succinate semialdehyde to succinate. This Sinorhizobium fredii (strain NBRC 101917 / NGR234) protein is Probable succinate-semialdehyde dehydrogenase [NADP(+)] (gabD).